The primary structure comprises 1507 residues: Paired amphipathic helix protein sin-3 (1507 aa).

5 disordered regions span residues 1-26, 228-286, 397-450, 543-569, and 1349-1434; these read MYNP…TNNA, PLAL…PPRV, ELGS…MMEE, VDDV…DSSK, and IPRE…MDHL. The segment covering 16–26 has biased composition (polar residues); the sequence is DQSQQQPTNNA. Positions 270–279 are enriched in basic residues; sequence RQNRPGRRKK. The 71-residue stretch at 282-352 folds into the PAH domain; sequence GPPRVDEALA…LGFNTFLPTG (71 aa). The segment covering 427–438 has biased composition (acidic residues); it reads DGIDDEDDEESG. Composition is skewed to basic and acidic residues over residues 439–450 and 555–568; these read IEDKNNEEMMEE and EIKK…KDSS. 3 stretches are compositionally biased toward acidic residues: residues 1354 to 1365, 1373 to 1382, and 1389 to 1421; these read KDDDDDDDEEGN, NVKDEDDGGD, and PDDD…DEPE.

As to quaternary structure, component of the SIN3S complex, which contains at least sin-3, hda-1, athp-1 and mrg-1. Interacts with ztf-11; the interaction is weak. Interacts with cfp-1. As to expression, expressed in all ray structural cells including ray 6, 7, 8 and 9 of the male tail. Also expressed in the inner labial neurons, socket cells, the cephalic neurons in the head and the ventral nerve cord.

The protein resides in the nucleus. Functionally, probable transcriptional repressor required for the deposition of dimethylated 'Lys-9' of histone H3 (H3K9me2) on asynapsed chromosome pairs (both autosomes and sex chromosomes) during meiosis, but this does not seem to solely affect the transcriptional status. Plays a role in ray fusion and patterning in the male tail, and this may be through activity of the histone deacetylase complex (HDAC). This Caenorhabditis elegans protein is Paired amphipathic helix protein sin-3.